We begin with the raw amino-acid sequence, 367 residues long: Leu/Ile/Val-binding protein (367 aa).

Positions 1–23 (MNIKGKALLAGCIALAFSNMALA) are cleaved as a signal peptide. Cys-76 and Cys-101 are disulfide-bonded.

This sequence belongs to the leucine-binding protein family.

The protein resides in the periplasm. This protein is a component of the leucine, isoleucine, valine, (threonine) transport system, which is one of the two periplasmic binding protein-dependent transport systems of the high-affinity transport of the branched-chain amino acids. The polypeptide is Leu/Ile/Val-binding protein (livJ) (Escherichia coli O157:H7).